An 86-amino-acid polypeptide reads, in one-letter code: Neuropeptide-like 3 (86 aa).

The signal sequence occupies residues 1 to 16 (MFKLCVFVALLSLAAA). Propeptides lie at residues 17 to 50 (APAP…VAPQ) and 63 to 75 (AITQ…LLIK). I85 carries the post-translational modification Isoleucine amide.

The protein resides in the secreted. The polypeptide is Neuropeptide-like 3 (Nplp3) (Drosophila yakuba (Fruit fly)).